Reading from the N-terminus, the 167-residue chain is Peptidyl-prolyl cis-trans isomerase-like 3 (167 aa).

The PPIase cyclophilin-type domain maps to 1-153 (MSVTLHTNLG…QEIKLLNVTV (153 aa)).

It belongs to the cyclophilin-type PPIase family. PPIL3 subfamily.

The enzyme catalyses [protein]-peptidylproline (omega=180) = [protein]-peptidylproline (omega=0). In terms of biological role, PPIases accelerate the folding of proteins. It catalyzes the cis-trans isomerization of proline imidic peptide bonds in oligopeptides. The sequence is that of Peptidyl-prolyl cis-trans isomerase-like 3 (CYP10) from Cryptococcus neoformans var. neoformans serotype D (strain B-3501A) (Filobasidiella neoformans).